Here is a 351-residue protein sequence, read N- to C-terminus: Phosphate acyltransferase (351 aa).

Belongs to the PlsX family. In terms of assembly, homodimer. Probably interacts with PlsY.

Its subcellular location is the cytoplasm. It carries out the reaction a fatty acyl-[ACP] + phosphate = an acyl phosphate + holo-[ACP]. Its pathway is lipid metabolism; phospholipid metabolism. Functionally, catalyzes the reversible formation of acyl-phosphate (acyl-PO(4)) from acyl-[acyl-carrier-protein] (acyl-ACP). This enzyme utilizes acyl-ACP as fatty acyl donor, but not acyl-CoA. This Neisseria meningitidis serogroup C / serotype 2a (strain ATCC 700532 / DSM 15464 / FAM18) protein is Phosphate acyltransferase.